A 1331-amino-acid polypeptide reads, in one-letter code: X-linked retinitis pigmentosa GTPase regulator-interacting protein 1 (1331 aa).

3 disordered regions span residues 1 to 165 (MQHL…PPAF), 183 to 220 (SQLT…SEEC), and 351 to 374 (HQPL…LPPQ). The segment covering 41–67 (NQKELNCRRLHLHEEPTLVKEPSPKQR) has biased composition (basic and acidic residues). Polar residues-rich tracts occupy residues 77 to 86 (VQRSTTTQPD) and 183 to 193 (SQLTHTMTTDS). The segment covering 194 to 220 (THVEEIPRSPEKTSKVEKPEQRSSEEC) has biased composition (basic and acidic residues). Coiled-coil stretches lie at residues 236–352 (ELIR…SSHQ) and 498–546 (MCYQ…LRSH). The segment covering 351-367 (HQPLDSSHQPHWSTELT) has biased composition (polar residues). The C2 domain occupies 745–870 (GARKVQSNES…AQNKSIKGDF (126 aa)). Disordered regions lie at residues 899–1057 (FQMS…VQDK) and 1088–1146 (AEDG…SDDI). The stretch at 908 to 999 (EGEEKEEEGG…DVLEASFTEE (92 aa)) forms a coiled coil. Acidic residues predominate over residues 910–988 (EEKEEEGGEE…EEEEEEEDEN (79 aa)). 2 stretches are compositionally biased toward basic and acidic residues: residues 1022 to 1039 (PEKR…REHQ) and 1088 to 1115 (AEDG…EHPS). Polar residues predominate over residues 1129 to 1141 (CEQASEVSETQTT). Residues 1136 to 1326 (SETQTTDSDD…ALHGIYKEMT (191 aa)) form an interaction with RPGR region.

Belongs to the RPGRIP1 family. As to quaternary structure, interacts with NPHP4. Interacts with NEK4. Forms homodimers and elongated homopolymers. Interacts with RPGR. Interacts with SPATA7. Interacts with CEP290/NPHP6; mediating the association between RPGR and CEP290/NPHP6. As to expression, expressed in the retina (at protein level).

The protein localises to the cell projection. Its subcellular location is the cilium. Functionally, may function as scaffolding protein. Required for normal location of RPGR at the connecting cilium of photoreceptor cells. Required for normal disk morphogenesis and disk organization in the outer segment of photoreceptor cells and for survival of photoreceptor cells. The chain is X-linked retinitis pigmentosa GTPase regulator-interacting protein 1 (Rpgrip1) from Mus musculus (Mouse).